The sequence spans 444 residues: tRNA modification GTPase MnmE (444 aa).

Residues Arg-23, Glu-82, and Lys-121 each coordinate (6S)-5-formyl-5,6,7,8-tetrahydrofolate. Positions 216 to 365 (GTSIVLAGLP…LKQALQKWLN (150 aa)) constitute a TrmE-type G domain. Asn-226 is a K(+) binding site. Residues 226–231 (NAGKSS), 245–251 (TDIPGTT), and 270–273 (DSAG) contribute to the GTP site. Residue Ser-230 coordinates Mg(2+). Residues Thr-245, Ile-247, and Thr-250 each coordinate K(+). A Mg(2+)-binding site is contributed by Thr-251. Lys-444 is a binding site for (6S)-5-formyl-5,6,7,8-tetrahydrofolate.

The protein belongs to the TRAFAC class TrmE-Era-EngA-EngB-Septin-like GTPase superfamily. TrmE GTPase family. Homodimer. Heterotetramer of two MnmE and two MnmG subunits. The cofactor is K(+).

Its subcellular location is the cytoplasm. In terms of biological role, exhibits a very high intrinsic GTPase hydrolysis rate. Involved in the addition of a carboxymethylaminomethyl (cmnm) group at the wobble position (U34) of certain tRNAs, forming tRNA-cmnm(5)s(2)U34. This chain is tRNA modification GTPase MnmE, found in Chlamydia trachomatis serovar A (strain ATCC VR-571B / DSM 19440 / HAR-13).